A 373-amino-acid polypeptide reads, in one-letter code: Probable di-N-acetylchitobiase 1 (373 aa).

Residues 1–20 form the signal peptide; that stretch reads MKIFIIISLILTILIIQSKS. One can recognise a GH18 domain in the interval 21–369; that stretch reads KECPCSNVEL…SGMWGALNSF (349 aa). Asn48 carries an N-linked (GlcNAc...) asparagine glycan. Residues 53 to 54 and 82 to 85 each bind chitin; these read PY and NGVR. Asn99 is a glycosylation site (N-linked (GlcNAc...) asparagine). The active-site Proton donor is Glu127. Residues Tyr128 and 191-194 each bind chitin; that span reads MDYD. N-linked (GlcNAc...) asparagine glycosylation is found at Asn222, Asn250, Asn269, Asn279, and Asn288. Trp347 is a chitin binding site.

It belongs to the glycosyl hydrolase 18 family.

It localises to the lysosome. Involved in the degradation of asparagine-linked glycoproteins. May hydrolyze of N-acetyl-beta-D-glucosamine (1-4)N-acetylglucosamine chitobiose core from the reducing end of the bond. This chain is Probable di-N-acetylchitobiase 1 (ctbs1), found in Dictyostelium discoideum (Social amoeba).